The chain runs to 116 residues: DNA polymerase epsilon subunit 4 (116 aa).

Positions 1–10 (MAAAAPGSGA) are enriched in low complexity. The interval 1–36 (MAAAAPGSGAAREEEGTGGDAATPQPPAPTSAPGAR) is disordered.

In terms of assembly, component of the DNA polymerase epsilon complex consisting of four subunits: the catalytic subunit POLE and the accessory subunits POLE2, POLE3 and POLE4. Interaction with POLE3 is a prerequisite for further binding with POLE and POLE2.

The protein resides in the nucleus. Accessory component of the DNA polymerase epsilon complex. Participates in DNA repair and in chromosomal DNA replication. The polypeptide is DNA polymerase epsilon subunit 4 (POLE4) (Bos taurus (Bovine)).